Reading from the N-terminus, the 444-residue chain is Methylenetetrahydrofolate--tRNA-(uracil-5-)-methyltransferase TrmFO (444 aa).

10-15 (GAGLAG) contacts FAD.

This sequence belongs to the MnmG family. TrmFO subfamily. Requires FAD as cofactor.

The protein resides in the cytoplasm. It carries out the reaction uridine(54) in tRNA + (6R)-5,10-methylene-5,6,7,8-tetrahydrofolate + NADH + H(+) = 5-methyluridine(54) in tRNA + (6S)-5,6,7,8-tetrahydrofolate + NAD(+). The catalysed reaction is uridine(54) in tRNA + (6R)-5,10-methylene-5,6,7,8-tetrahydrofolate + NADPH + H(+) = 5-methyluridine(54) in tRNA + (6S)-5,6,7,8-tetrahydrofolate + NADP(+). Its function is as follows. Catalyzes the folate-dependent formation of 5-methyl-uridine at position 54 (M-5-U54) in all tRNAs. In Streptococcus pneumoniae (strain Taiwan19F-14), this protein is Methylenetetrahydrofolate--tRNA-(uracil-5-)-methyltransferase TrmFO.